A 370-amino-acid polypeptide reads, in one-letter code: Coproporphyrin III ferrochelatase (370 aa).

Fe-coproporphyrin III is bound by residues serine 58 and tyrosine 127. Positions 189 and 276 each coordinate Fe(2+).

This sequence belongs to the ferrochelatase family.

Its subcellular location is the cytoplasm. It carries out the reaction Fe-coproporphyrin III + 2 H(+) = coproporphyrin III + Fe(2+). The protein operates within porphyrin-containing compound metabolism; protoheme biosynthesis. Functionally, involved in coproporphyrin-dependent heme b biosynthesis. Catalyzes the insertion of ferrous iron into coproporphyrin III to form Fe-coproporphyrin III. The chain is Coproporphyrin III ferrochelatase from Corynebacterium glutamicum (strain ATCC 13032 / DSM 20300 / JCM 1318 / BCRC 11384 / CCUG 27702 / LMG 3730 / NBRC 12168 / NCIMB 10025 / NRRL B-2784 / 534).